Reading from the N-terminus, the 319-residue chain is Small ribosomal subunit protein RACK1 (319 aa).

Position 2 is an N-acetylalanine (Ala-2). WD repeat units follow at residues 15–55 (GHNG…QKFG), 63–102 (GHSH…TYQR), 105–145 (GHKS…ATLL), 147–191 (HNDW…IEAD), 194–233 (GHNS…AMYT), 235–275 (SAQD…DDLR), and 284–319 (AAEP…MTAN). Residues Lys-46 and Lys-53 each participate in a glycyl lysine isopeptide (Lys-Gly) (interchain with G-Cter in ubiquitin) cross-link. Thr-96 is subject to Phosphothreonine. Glycyl lysine isopeptide (Lys-Gly) (interchain with G-Cter in ubiquitin) cross-links involve residues Lys-107, Lys-137, and Lys-161. Thr-168 bears the Phosphothreonine mark.

Belongs to the WD repeat G protein beta family. Ribosomal protein RACK1 subfamily. Component of the small ribosomal subunit (SSU). Mature yeast ribosomes consist of a small (40S) and a large (60S) subunit. The 40S small subunit contains 1 molecule of ribosomal RNA (18S rRNA) and 33 different proteins (encoded by 57 genes). The large 60S subunit contains 3 rRNA molecules (25S, 5.8S and 5S rRNA) and 46 different proteins (encoded by 81 genes). RACK1 is located at the head of the SSU in the vicinity of the mRNA exit channel. RACK1 interacts with the mRNA-binding protein SCP16. RACK1 also exists simultaneously as a homodimer in a cytosolic non-ribosome-bound form.

Its subcellular location is the cytoplasm. In terms of biological role, component of the ribosome, a large ribonucleoprotein complex responsible for the synthesis of proteins in the cell. The small ribosomal subunit (SSU) binds messenger RNAs (mRNAs) and translates the encoded message by selecting cognate aminoacyl-transfer RNA (tRNA) molecules. The large subunit (LSU) contains the ribosomal catalytic site termed the peptidyl transferase center (PTC), which catalyzes the formation of peptide bonds, thereby polymerizing the amino acids delivered by tRNAs into a polypeptide chain. The nascent polypeptides leave the ribosome through a tunnel in the LSU and interact with protein factors that function in enzymatic processing, targeting, and the membrane insertion of nascent chains at the exit of the ribosomal tunnel. Located at the head of the 40S ribosomal subunit in the vicinity of the mRNA exit channel, RACK1 serves as a scaffold protein that can recruit other proteins to the ribosome. Involved in induction of the ribosome quality control (RQC) pathway; a pathway that degrades nascent peptide chains during problematic translation. Involved in the negative regulation of translation of a specific subset of proteins. This chain is Small ribosomal subunit protein RACK1, found in Saccharomyces cerevisiae (strain ATCC 204508 / S288c) (Baker's yeast).